Reading from the N-terminus, the 520-residue chain is 4-hydroxyphenylacetate 3-monooxygenase oxygenase component (520 aa).

Residues 155-157 (HAI) and Thr-196 contribute to the FAD site.

It belongs to the FADH(2)-utilizing monooxygenase family. In terms of assembly, homodimer. HPA 3-hydroxylase consists of a reductase component HpaC and an oxygenase component HpaB. Some form of interactions between the reductase and the oxygenase facilitate the transfer of FADH(-) to the oxygenase in P.aeruginosa, although interactions are not required in other species.

The enzyme catalyses 4-hydroxyphenylacetate + FADH2 + O2 = 3,4-dihydroxyphenylacetate + FAD + H2O + H(+). It functions in the pathway aromatic compound metabolism; 4-hydroxyphenylacetate degradation; pyruvate and succinate semialdehyde from 4-hydroxyphenylacetate: step 1/7. Its function is as follows. Oxygenase component of the 4-hydroxyphenylacetate (HPA) 3-hydroxylase. Catalyzes the hydroxylation of 4-hydroxyphenylacetate to form 3,4-dihydroxyphenylacetate, using FADH(-) provided by the reductase component HpaC to activate oxygen. To a lesser extent, can also use reduced FMN. In vitro, has hydroxylation activity toward tyrosol and various cinnamic acid derivatives, catalyzing the hydroxylation of p-coumaric acid, caffeic acid, ferulic acid, and coniferaldehyde. In Pseudomonas aeruginosa (strain ATCC 15692 / DSM 22644 / CIP 104116 / JCM 14847 / LMG 12228 / 1C / PRS 101 / PAO1), this protein is 4-hydroxyphenylacetate 3-monooxygenase oxygenase component.